Consider the following 521-residue polypeptide: Bifunctional purine biosynthesis protein PurH (521 aa).

The region spanning 1–145 (MIKQALISVS…KNHKDVIVIC (145 aa)) is the MGS-like domain.

This sequence belongs to the PurH family.

The enzyme catalyses (6R)-10-formyltetrahydrofolate + 5-amino-1-(5-phospho-beta-D-ribosyl)imidazole-4-carboxamide = 5-formamido-1-(5-phospho-D-ribosyl)imidazole-4-carboxamide + (6S)-5,6,7,8-tetrahydrofolate. The catalysed reaction is IMP + H2O = 5-formamido-1-(5-phospho-D-ribosyl)imidazole-4-carboxamide. It functions in the pathway purine metabolism; IMP biosynthesis via de novo pathway; 5-formamido-1-(5-phospho-D-ribosyl)imidazole-4-carboxamide from 5-amino-1-(5-phospho-D-ribosyl)imidazole-4-carboxamide (10-formyl THF route): step 1/1. Its pathway is purine metabolism; IMP biosynthesis via de novo pathway; IMP from 5-formamido-1-(5-phospho-D-ribosyl)imidazole-4-carboxamide: step 1/1. The chain is Bifunctional purine biosynthesis protein PurH from Janthinobacterium sp. (strain Marseille) (Minibacterium massiliensis).